The sequence spans 503 residues: UDP-N-acetylmuramate--L-alanine ligase (503 aa).

The segment at 1–22 is disordered; sequence MIKQTHVSNSSNNSTNSTAAQV. Over residues 8–18 the composition is skewed to low complexity; sequence SNSSNNSTNST. Residue 135-141 coordinates ATP; it reads GTHGKTT.

This sequence belongs to the MurCDEF family.

Its subcellular location is the cytoplasm. The catalysed reaction is UDP-N-acetyl-alpha-D-muramate + L-alanine + ATP = UDP-N-acetyl-alpha-D-muramoyl-L-alanine + ADP + phosphate + H(+). The protein operates within cell wall biogenesis; peptidoglycan biosynthesis. In terms of biological role, cell wall formation. This is UDP-N-acetylmuramate--L-alanine ligase from Colwellia psychrerythraea (strain 34H / ATCC BAA-681) (Vibrio psychroerythus).